The chain runs to 33 residues: Kunitz-type serine protease inhibitor hainantoxin F7-25.66 (33 aa).

The BPTI/Kunitz inhibitor domain maps to 4–33 (CRLPSDRGRCKASFERWYFNGRTCAKFIYG).

Belongs to the venom Kunitz-type family. 02 (native) subfamily. Expressed by the venom gland.

The protein resides in the secreted. Serine protease inhibitor that inhibits trypsin at a molar ratio of 1:1. The chain is Kunitz-type serine protease inhibitor hainantoxin F7-25.66 from Cyriopagopus hainanus (Chinese bird spider).